A 494-amino-acid polypeptide reads, in one-letter code: Glycerol kinase (494 aa).

Threonine 12 contacts ADP. Positions 12, 13, and 14 each coordinate ATP. Threonine 12 contributes to the sn-glycerol 3-phosphate binding site. Residue arginine 16 coordinates ADP. Positions 82, 83, 134, and 241 each coordinate sn-glycerol 3-phosphate. The glycerol site is built by arginine 82, glutamate 83, tyrosine 134, aspartate 241, and glutamine 242. 2 residues coordinate ADP: threonine 263 and glycine 306. ATP-binding residues include threonine 263, glycine 306, glutamine 310, and glycine 407. Glycine 407 is a binding site for ADP.

The protein belongs to the FGGY kinase family.

It carries out the reaction glycerol + ATP = sn-glycerol 3-phosphate + ADP + H(+). It functions in the pathway polyol metabolism; glycerol degradation via glycerol kinase pathway; sn-glycerol 3-phosphate from glycerol: step 1/1. Inhibited by fructose 1,6-bisphosphate (FBP). Its function is as follows. Key enzyme in the regulation of glycerol uptake and metabolism. Catalyzes the phosphorylation of glycerol to yield sn-glycerol 3-phosphate. The protein is Glycerol kinase of Brachyspira hyodysenteriae (strain ATCC 49526 / WA1).